A 234-amino-acid chain; its full sequence is Large ribosomal subunit protein uL1 (234 aa).

It belongs to the universal ribosomal protein uL1 family. In terms of assembly, part of the 50S ribosomal subunit.

In terms of biological role, binds directly to 23S rRNA. The L1 stalk is quite mobile in the ribosome, and is involved in E site tRNA release. Functionally, protein L1 is also a translational repressor protein, it controls the translation of the L11 operon by binding to its mRNA. The sequence is that of Large ribosomal subunit protein uL1 from Yersinia pseudotuberculosis serotype O:1b (strain IP 31758).